The following is a 99-amino-acid chain: TSQGTTPDKVQLEVNCISNLPNNEVEETDLLRELEMIEENLFGKELSFVPEENRNSRHKRCMGYDIECNERLHCCADLECVKTSGRWWYKKTYCRRKSG.

3 disulfide bridges follow: C61/C75, C68/C80, and C74/C94.

It belongs to the neurotoxin 14 (magi-1) family. 09 (magi-1) subfamily. As to expression, expressed by the venom gland.

The protein localises to the secreted. In terms of biological role, inhibits voltage-gated sodium channels by binding to site 3. Insecticidal neurotoxin. The chain is Mu-hexatoxin-Mg1c from Macrothele gigas (Japanese funnel web spider).